Reading from the N-terminus, the 188-residue chain is Succinate-acetate/proton symporter SatP (188 aa).

Residues 1–13 (MGNTKLANPAPLG) lie on the Cytoplasmic side of the membrane. The helical transmembrane segment at 14 to 34 (LMGFGMTTILLNLHNVGYFAL) threads the bilayer. Asp-35 is a topological domain (periplasmic). Residues 36-56 (GIILAMGIFYGGIAQIFAGLL) form a helical membrane-spanning segment. Topologically, residues 57-63 (EYKKGNT) are cytoplasmic. A helical transmembrane segment spans residues 64 to 84 (FGLTAFTSYGSFWLTLVAILL). The Periplasmic portion of the chain corresponds to 85 to 97 (MPKLGLTDAPNAQ). A helical transmembrane segment spans residues 98–118 (FLGVYLGLWGVFTLFMFFGTL). The Cytoplasmic segment spans residues 119–122 (KGAR). A helical membrane pass occupies residues 123–143 (VLQFVFFSLTVLFALLAIGNI). Topologically, residues 144–148 (AGNAA) are periplasmic. Residues 149-169 (IIHFAGWIGLICGASAIYLAM) form a helical membrane-spanning segment. At 170 to 188 (GEVLNEQFGRTVLPIGESH) the chain is on the cytoplasmic side.

Belongs to the acetate uptake transporter (AceTr) (TC 2.A.96) family.

It localises to the cell inner membrane. Functionally, uptake of acetate and succinate. Transport is energetically dependent on the protonmotive force. This chain is Succinate-acetate/proton symporter SatP (satP), found in Escherichia coli O157:H7.